The sequence spans 365 residues: Heme A synthase (365 aa).

8 consecutive transmembrane segments (helical) span residues 17–37 (AVRIWLTVVAALIAVMVLVGG), 107–127 (VIGIAYLLPFLWFLWRGAIGP), 132–152 (ALWGIFALGALQGAVGWWMVA), 164–184 (VRLAVHLTLALIIYAAIVWTL), 203–223 (AIALLALTLLQLFLGALVAGL), 264–283 (QFDHRMMAYALWALAAWHAI), 296–316 (GALWLFAALSLQAVLGILTVL), and 320–340 (PIGLALAHQAVGIVVLTLAVL). His-267 lines the heme pocket. A heme-binding site is contributed by His-327.

Belongs to the COX15/CtaA family. Type 2 subfamily. Interacts with CtaB. Requires heme b as cofactor.

It localises to the cell membrane. The enzyme catalyses Fe(II)-heme o + 2 A + H2O = Fe(II)-heme a + 2 AH2. Its pathway is porphyrin-containing compound metabolism; heme A biosynthesis; heme A from heme O: step 1/1. Functionally, catalyzes the conversion of heme O to heme A by two successive hydroxylations of the methyl group at C8. The first hydroxylation forms heme I, the second hydroxylation results in an unstable dihydroxymethyl group, which spontaneously dehydrates, resulting in the formyl group of heme A. This chain is Heme A synthase, found in Rhodopseudomonas palustris (strain HaA2).